The primary structure comprises 235 residues: Phosphoribosylaminoimidazole-succinocarboxamide synthase (235 aa).

It belongs to the SAICAR synthetase family.

It catalyses the reaction 5-amino-1-(5-phospho-D-ribosyl)imidazole-4-carboxylate + L-aspartate + ATP = (2S)-2-[5-amino-1-(5-phospho-beta-D-ribosyl)imidazole-4-carboxamido]succinate + ADP + phosphate + 2 H(+). It functions in the pathway purine metabolism; IMP biosynthesis via de novo pathway; 5-amino-1-(5-phospho-D-ribosyl)imidazole-4-carboxamide from 5-amino-1-(5-phospho-D-ribosyl)imidazole-4-carboxylate: step 1/2. In Prosthecochloris aestuarii (strain DSM 271 / SK 413), this protein is Phosphoribosylaminoimidazole-succinocarboxamide synthase.